The chain runs to 505 residues: Deoxyguanosinetriphosphate triphosphohydrolase (505 aa).

The HD domain maps to 66 to 273 (RLTHSMEVQQ…MEAADDISYC (208 aa)).

It belongs to the dGTPase family. Type 1 subfamily. In terms of assembly, homotetramer. Mg(2+) serves as cofactor.

The catalysed reaction is dGTP + H2O = 2'-deoxyguanosine + triphosphate + H(+). DGTPase preferentially hydrolyzes dGTP over the other canonical NTPs. This chain is Deoxyguanosinetriphosphate triphosphohydrolase, found in Shigella boydii serotype 18 (strain CDC 3083-94 / BS512).